Here is a 782-residue protein sequence, read N- to C-terminus: Chondroitin proteoglycan 4 (782 aa).

The first 18 residues, M1–P18, serve as a signal peptide directing secretion. N76, N208, N462, N468, N474, and N503 each carry an N-linked (GlcNAc...) asparagine glycan. The interval I513–K726 is disordered. Composition is skewed to low complexity over residues E520–G532, S548–E566, S573–T612, F662–S672, and S688–G722. N559 carries N-linked (GlcNAc...) asparagine glycosylation. The O-linked (Xyl...) (chondroitin sulfate) serine glycan is linked to S691. Residue N699 is glycosylated (N-linked (GlcNAc...) asparagine). Residues S701, S704, S708, S714, and S721 are each glycosylated (O-linked (Xyl...) (chondroitin sulfate) serine). An N-linked (GlcNAc...) asparagine glycan is attached at N743.

The polypeptide is Chondroitin proteoglycan 4 (Caenorhabditis elegans).